Consider the following 361-residue polypeptide: dTDP-glucose 4,6-dehydratase (361 aa).

NAD(+) contacts are provided by residues F11–I12, D32–T35, D58–I59, L80–S84, and T99. A substrate-binding site is contributed by S84. T133 lines the substrate pocket. The active-site Proton donor is D134. Catalysis depends on proton acceptor residues E135 and Y167. Y167–K171 provides a ligand contact to NAD(+). A substrate-binding site is contributed by N196. N197 is a binding site for NAD(+). Residues K206–L207, P222–Y224, R231, N266, D296–H300, and Y357 contribute to the substrate site.

The protein belongs to the NAD(P)-dependent epimerase/dehydratase family. dTDP-glucose dehydratase subfamily. As to quaternary structure, homodimer. It depends on NAD(+) as a cofactor.

The enzyme catalyses dTDP-alpha-D-glucose = dTDP-4-dehydro-6-deoxy-alpha-D-glucose + H2O. The protein operates within carbohydrate biosynthesis; dTDP-L-rhamnose biosynthesis. Its pathway is bacterial outer membrane biogenesis; LPS O-antigen biosynthesis. Catalyzes the dehydration of dTDP-D-glucose to form dTDP-6-deoxy-D-xylo-4-hexulose via a three-step process involving oxidation, dehydration and reduction. This is dTDP-glucose 4,6-dehydratase from Salmonella typhimurium (strain LT2 / SGSC1412 / ATCC 700720).